A 374-amino-acid chain; its full sequence is ORC1-type DNA replication protein 6 (374 aa).

ATP contacts are provided by residues 66 to 70, Tyr-209, and Arg-221; that span reads TGKTT.

The protein belongs to the CDC6/cdc18 family.

Involved in regulation of DNA replication. The polypeptide is ORC1-type DNA replication protein 6 (orc6) (Halobacterium salinarum (strain ATCC 700922 / JCM 11081 / NRC-1) (Halobacterium halobium)).